A 375-amino-acid polypeptide reads, in one-letter code: POU domain, class 3, transcription factor 1-B (375 aa).

Disordered stretches follow at residues 1–29, 56–139, and 151–200; these read MAAT…RMHQ, MSLT…QPLI, and MLGP…PSSD. Composition is skewed to polar residues over residues 107 to 117, 129 to 139, and 151 to 160; these read VHQQTPSSHAW, SPGSNSHQPLI, and MLGPQASSLH. Over residues 162–178 the composition is skewed to basic and acidic residues; the sequence is SMRDPLHDDPGVHDTHV. Residues 194-268 enclose the POU-specific domain; it reads EDAPSSDDLE…LLNKWLEETD (75 aa). A DNA-binding region (homeobox) is located at residues 286–345; that stretch reads KRKKRTSIEVGVKGALENHFLKCPKPSAHEITSLADSLQLEKEVVRVWFCNRRQKEKRMT.

Belongs to the POU transcription factor family. Class-3 subfamily.

The protein resides in the nucleus. Functionally, acts as a transcription factor. May play a role in neuronal differentiation. In Xenopus laevis (African clawed frog), this protein is POU domain, class 3, transcription factor 1-B (pou3f1-b).